Reading from the N-terminus, the 453-residue chain is Insulinoma-associated protein 1b (453 aa).

The SNAG domain stretch occupies residues 1-20 (MPKGFLVKRNKKAALVSYRI). The segment at 140 to 179 (NSNRSGTASGAHAPAIQTGAKRPSADAAERKVSSKSAKKP) is disordered. The segment covering 162–171 (PSADAAERKV) has biased composition (basic and acidic residues). A C2H2-type 1 zinc finger spans residues 252-274 (YRCPECEKVFSCPANLASHRRWH). The disordered stretch occupies residues 298-318 (AEFPSDRDTPSPGLSESGSED). C2H2-type zinc fingers lie at residues 321 to 343 (YDCQHCGKRFKRQAYLRKHILGH), 383 to 406 (LTCPACGEKLPNRASLERHLRLLH), and 412 to 435 (FPCKFCPATFYSSPGLTRHINKCH).

Belongs to the INSM1 family.

The protein resides in the nucleus. Its function is as follows. May act as a transcriptional regulator. May play a role in neurogenesis and neuroendocrine cell differentiation during embryonic development. This is Insulinoma-associated protein 1b (insm1b) from Danio rerio (Zebrafish).